The primary structure comprises 485 residues: ATP synthase subunit beta (485 aa).

ATP is bound at residue 170–177 (GGAGVGKT).

The protein belongs to the ATPase alpha/beta chains family. In terms of assembly, F-type ATPases have 2 components, CF(1) - the catalytic core - and CF(0) - the membrane proton channel. CF(1) has five subunits: alpha(3), beta(3), gamma(1), delta(1), epsilon(1). CF(0) has three main subunits: a(1), b(2) and c(9-12). The alpha and beta chains form an alternating ring which encloses part of the gamma chain. CF(1) is attached to CF(0) by a central stalk formed by the gamma and epsilon chains, while a peripheral stalk is formed by the delta and b chains.

The protein localises to the cell membrane. It carries out the reaction ATP + H2O + 4 H(+)(in) = ADP + phosphate + 5 H(+)(out). Functionally, produces ATP from ADP in the presence of a proton gradient across the membrane. The catalytic sites are hosted primarily by the beta subunits. The sequence is that of ATP synthase subunit beta from Salinispora arenicola (strain CNS-205).